Reading from the N-terminus, the 287-residue chain is mRNA-capping enzyme regulatory subunit OPG124 (287 aa).

The protein belongs to the orthopoxvirus mRNA-capping enzyme regulatory subunit family. As to quaternary structure, interacts with the catalytic subunit OPG113.

It localises to the virion. Functionally, regulatory subunit of the mRNA cap enzyme which stabilizes the catalytic subunit and enhances its methyltransferase activity through an allosteric mechanism. Heterodimeric mRNA capping enzyme catalyzes the linkage of a N7-methyl-guanosine moiety to the first transcribed nucleotide (cap 0 structure), whereas the methyltransferase OPG102 is responsible for a second methylation at the 2'-O position of the ribose (cap 1 structure). Also involved in early viral gene transcription termination and intermediate viral gene transcription initiation. Early gene transcription termination requires the termination factor VTF, the DNA-dependent ATPase NPH-I/OPG123 and the RAP94/OPG109 subunit of the viral RNA polymerase, as well as the presence of a specific termination motif. Binds, together with RAP94/OPG109, to the termination motif 5'-UUUUUNU-3' in the nascent early mRNA. The protein is mRNA-capping enzyme regulatory subunit OPG124 (OPG124) of Vaccinia virus (strain Copenhagen) (VACV).